A 68-amino-acid chain; its full sequence is Large ribosomal subunit protein eL24 (68 aa).

4 residues coordinate Zn(2+): Cys7, Cys10, Cys33, and Cys37. A C4-type zinc finger spans residues 7-37 (CDFCGRIIEPGTGKMFVKNDGTILWFCSSKC).

It belongs to the eukaryotic ribosomal protein eL24 family. Part of the 50S ribosomal subunit. Forms a cluster with proteins L3 and L14. Requires Zn(2+) as cofactor.

Its function is as follows. Binds to the 23S rRNA. The sequence is that of Large ribosomal subunit protein eL24 from Methanopyrus kandleri (strain AV19 / DSM 6324 / JCM 9639 / NBRC 100938).